The following is a 197-amino-acid chain: Recombination protein RecR (197 aa).

The segment at 56–71 (CQRCHSFSDEAVCPLC) adopts a C4-type zinc-finger fold. The 96-residue stretch at 79–174 (TLLCVVETAA…KVTRLAQGVP (96 aa)) folds into the Toprim domain.

The protein belongs to the RecR family.

In terms of biological role, may play a role in DNA repair. It seems to be involved in an RecBC-independent recombinational process of DNA repair. It may act with RecF and RecO. The sequence is that of Recombination protein RecR from Psychrobacter cryohalolentis (strain ATCC BAA-1226 / DSM 17306 / VKM B-2378 / K5).